The chain runs to 434 residues: Hydrogenobyrinate a,c-diamide synthase (434 aa).

The GATase cobBQ-type domain maps to 243–434; it reads RIAVARDIAF…MHLIDVAGAA (192 aa). C326 acts as the Nucleophile in catalysis.

Belongs to the CobB/CbiA family. In terms of assembly, homodimer. The cofactor is Mg(2+).

The enzyme catalyses hydrogenobyrinate + 2 L-glutamine + 2 ATP + 2 H2O = hydrogenobyrinate a,c-diamide + 2 L-glutamate + 2 ADP + 2 phosphate + 2 H(+). The protein operates within cofactor biosynthesis; adenosylcobalamin biosynthesis; cob(II)yrinate a,c-diamide from precorrin-2 (aerobic route): step 9/10. Functionally, catalyzes the ATP-dependent amidation of the two carboxylate groups at positions a and c of hydrogenobyrinate, using either L-glutamine or ammonia as the nitrogen source. To a much lesser extent, can also use cobyrinate as substrate in vitro, but the physiological substrate is indeed hydrogenobyrinate, as part of the aerobic pathway for cobalamin biosynthesis. The chain is Hydrogenobyrinate a,c-diamide synthase from Sinorhizobium sp.